Here is a 409-residue protein sequence, read N- to C-terminus: Na(+)-translocating NADH-quinone reductase subunit F (409 aa).

Residues 5 to 25 traverse the membrane as a helical segment; the sequence is FIFGIIAFTALVLVLAVIILF. The 2Fe-2S ferredoxin-type domain occupies 34 to 128; that stretch reads GDITISINDD…SMDVELPEEI (95 aa). C71, C77, C80, and C112 together coordinate [2Fe-2S] cluster. Residues 131 to 271 form the FAD-binding FR-type domain; the sequence is VKKWECTVIS…SGPFGEFFAK (141 aa).

Belongs to the NqrF family. As to quaternary structure, composed of six subunits; NqrA, NqrB, NqrC, NqrD, NqrE and NqrF. Requires [2Fe-2S] cluster as cofactor. FAD serves as cofactor.

The protein localises to the cell inner membrane. It catalyses the reaction a ubiquinone + n Na(+)(in) + NADH + H(+) = a ubiquinol + n Na(+)(out) + NAD(+). NQR complex catalyzes the reduction of ubiquinone-1 to ubiquinol by two successive reactions, coupled with the transport of Na(+) ions from the cytoplasm to the periplasm. The first step is catalyzed by NqrF, which accepts electrons from NADH and reduces ubiquinone-1 to ubisemiquinone by a one-electron transfer pathway. This is Na(+)-translocating NADH-quinone reductase subunit F from Haemophilus ducreyi (strain 35000HP / ATCC 700724).